Here is a 131-residue protein sequence, read N- to C-terminus: Small ribosomal subunit protein uS8 (131 aa).

This sequence belongs to the universal ribosomal protein uS8 family. In terms of assembly, part of the 30S ribosomal subunit. Contacts proteins S5 and S12.

Functionally, one of the primary rRNA binding proteins, it binds directly to 16S rRNA central domain where it helps coordinate assembly of the platform of the 30S subunit. The sequence is that of Small ribosomal subunit protein uS8 from Paracidovorax citrulli (strain AAC00-1) (Acidovorax citrulli).